A 162-amino-acid polypeptide reads, in one-letter code: uncharacterized protein (162 aa).

Residues 1-23 (MAQLPLSPAPQRPETKTPGKPEA) form a disordered region. Over residues 13-23 (PETKTPGKPEA) the composition is skewed to basic and acidic residues.

This is an uncharacterized protein from Rhodobacter capsulatus (Rhodopseudomonas capsulata).